Reading from the N-terminus, the 74-residue chain is Peptide BmKb2 (74 aa).

A signal peptide spans M1 to A22. K40 carries the lysine amide modification. A propeptide spanning residues D46 to Y74 is cleaved from the precursor.

The protein belongs to the non-disulfide-bridged peptide (NDBP) superfamily. Short antimicrobial peptide (group 4) family.

The protein resides in the secreted. It is found in the target cell membrane. Its function is as follows. Antibacterial peptide. This peptide gene is up-regulated at the transcriptional level after the venom gland is challenged by Gram-positive bacteria. The protein is Peptide BmKb2 of Olivierus martensii (Manchurian scorpion).